We begin with the raw amino-acid sequence, 183 residues long: Large ribosomal subunit protein uL5 (183 aa).

It belongs to the universal ribosomal protein uL5 family. Part of the 50S ribosomal subunit; part of the 5S rRNA/L5/L18/L25 subcomplex. Contacts the 5S rRNA and the P site tRNA. Forms a bridge to the 30S subunit in the 70S ribosome.

Functionally, this is one of the proteins that bind and probably mediate the attachment of the 5S RNA into the large ribosomal subunit, where it forms part of the central protuberance. In the 70S ribosome it contacts protein S13 of the 30S subunit (bridge B1b), connecting the 2 subunits; this bridge is implicated in subunit movement. Contacts the P site tRNA; the 5S rRNA and some of its associated proteins might help stabilize positioning of ribosome-bound tRNAs. In Flavobacterium johnsoniae (strain ATCC 17061 / DSM 2064 / JCM 8514 / BCRC 14874 / CCUG 350202 / NBRC 14942 / NCIMB 11054 / UW101) (Cytophaga johnsonae), this protein is Large ribosomal subunit protein uL5.